The following is a 156-amino-acid chain: Transcription elongation factor GreA 1 (156 aa).

A coiled-coil region spans residues 43–74 (RSENAEYSSAKRDLGRLESRLRYLNKQLQYAQ).

This sequence belongs to the GreA/GreB family.

Functionally, necessary for efficient RNA polymerase transcription elongation past template-encoded arresting sites. The arresting sites in DNA have the property of trapping a certain fraction of elongating RNA polymerases that pass through, resulting in locked ternary complexes. Cleavage of the nascent transcript by cleavage factors such as GreA or GreB allows the resumption of elongation from the new 3'terminus. GreA releases sequences of 2 to 3 nucleotides. This chain is Transcription elongation factor GreA 1, found in Lactiplantibacillus plantarum (strain ATCC BAA-793 / NCIMB 8826 / WCFS1) (Lactobacillus plantarum).